A 511-amino-acid polypeptide reads, in one-letter code: GATOR complex protein NPRL3 (511 aa).

The tract at residues 37 to 58 (KPATKAPSKDPQPSSSNPGQCV) is disordered.

It belongs to the NPR3 family. Probably part of the GATOR complex.

The protein resides in the lysosome membrane. As a component of the GATOR complex may function in the amino acid-sensing branch of the TORC1 signaling pathway. This Caenorhabditis elegans protein is GATOR complex protein NPRL3 (nprl-3).